The chain runs to 487 residues: Malonate-semialdehyde dehydrogenase 2 (487 aa).

Positions 154, 178, 181, 182, and 231 each coordinate NAD(+). Residue C286 is the Nucleophile of the active site. Position 386 (E386) interacts with NAD(+).

It belongs to the aldehyde dehydrogenase family. IolA subfamily. Homotetramer.

The enzyme catalyses 3-oxopropanoate + NAD(+) + CoA + H2O = hydrogencarbonate + acetyl-CoA + NADH + H(+). It carries out the reaction 2-methyl-3-oxopropanoate + NAD(+) + CoA + H2O = propanoyl-CoA + hydrogencarbonate + NADH + H(+). It participates in polyol metabolism; myo-inositol degradation into acetyl-CoA; acetyl-CoA from myo-inositol: step 7/7. Catalyzes the oxidation of malonate semialdehyde (MSA) and methylmalonate semialdehyde (MMSA) into acetyl-CoA and propanoyl-CoA, respectively. Is involved in a myo-inositol catabolic pathway. Bicarbonate, and not CO2, is the end-product of the enzymatic reaction. The protein is Malonate-semialdehyde dehydrogenase 2 of Bacillus thuringiensis (strain Al Hakam).